The sequence spans 212 residues: Thymidylate kinase (212 aa).

10-17 contacts ATP; that stretch reads GPEGAGKT.

It belongs to the thymidylate kinase family.

It catalyses the reaction dTMP + ATP = dTDP + ADP. Its function is as follows. Phosphorylation of dTMP to form dTDP in both de novo and salvage pathways of dTTP synthesis. This Bacillus velezensis (strain DSM 23117 / BGSC 10A6 / LMG 26770 / FZB42) (Bacillus amyloliquefaciens subsp. plantarum) protein is Thymidylate kinase.